We begin with the raw amino-acid sequence, 118 residues long: Down syndrome critical region protein 4 (118 aa).

The tract at residues 1 to 39 (MSLIILTRDDEPRIFTPDSDAASPALHSTSPLPDPASAS) is disordered. Positions 28 to 39 (STSPLPDPASAS) are enriched in low complexity.

As to expression, mainly expressed in placenta.

The protein is Down syndrome critical region protein 4 (DSCR4) of Homo sapiens (Human).